The primary structure comprises 148 residues: Macrodomain Ter protein (148 aa).

The protein belongs to the MatP family. Homodimer.

The protein localises to the cytoplasm. Required for spatial organization of the terminus region of the chromosome (Ter macrodomain) during the cell cycle. Prevents early segregation of duplicated Ter macrodomains during cell division. Binds specifically to matS, which is a 13 bp signature motif repeated within the Ter macrodomain. This Haemophilus influenzae (strain ATCC 51907 / DSM 11121 / KW20 / Rd) protein is Macrodomain Ter protein.